Here is a 494-residue protein sequence, read N- to C-terminus: Probable cytosol aminopeptidase (494 aa).

Positions 260 and 265 each coordinate Mn(2+). Residue Lys272 is part of the active site. The Mn(2+) site is built by Asp283, Asp342, and Glu344. Arg346 is a catalytic residue.

The protein belongs to the peptidase M17 family. Requires Mn(2+) as cofactor.

The protein resides in the cytoplasm. The enzyme catalyses Release of an N-terminal amino acid, Xaa-|-Yaa-, in which Xaa is preferably Leu, but may be other amino acids including Pro although not Arg or Lys, and Yaa may be Pro. Amino acid amides and methyl esters are also readily hydrolyzed, but rates on arylamides are exceedingly low.. The catalysed reaction is Release of an N-terminal amino acid, preferentially leucine, but not glutamic or aspartic acids.. Its function is as follows. Presumably involved in the processing and regular turnover of intracellular proteins. Catalyzes the removal of unsubstituted N-terminal amino acids from various peptides. In Bacillus cereus (strain Q1), this protein is Probable cytosol aminopeptidase.